Reading from the N-terminus, the 827-residue chain is Polyhomeotic-like protein 2 (827 aa).

Disordered regions lie at residues 1-78 (MEKE…QYLQ), 282-316 (GLGA…SDLT), and 482-545 (QEPT…PPQA). The segment covering 9-38 (SVASSASVTIPSTTSVSTSTSAGTLSNSSS) has biased composition (low complexity). Basic and acidic residues predominate over residues 485 to 498 (TRTELRQSDKESQV). Residues 517 to 538 (AMTSGSGNNAPTVTGSAPQNGE) show a composition bias toward polar residues. Positions 540-570 (KPPPQAVVKPQILTHVIEGFVIQEGAEPFPV) match the HD1 motif. An FCS-type zinc finger spans residues 609–643 (NNQPEPVRTCEFCGNVDFAFNFKRSKRFCSTVCAK). 4 residues coordinate Zn(2+): Cys-618, Cys-621, Cys-637, and Cys-641. A disordered region spans residues 653–730 (MGLFPGKSSP…EPISPLSNSS (78 aa)). Positions 661 to 675 (SPEDTKKPKASDESP) are enriched in basic and acidic residues. 2 stretches are compositionally biased toward polar residues: residues 687 to 696 (PSIQTTTGAS) and 708 to 717 (GESSQCSDMS). Residues 763–827 (WNVEDVYEFI…FARISMLKDS (65 aa)) form the SAM domain.

As to quaternary structure, component of a PRC1-like complex. As to expression, isoform 1 expression is stronger at the posterior border than in the anterior region within individual somites; On the contrary, isoform 2 expression is higher at the posterior border.

It localises to the nucleus. Its function is as follows. Component of a Polycomb group (PcG) multiprotein PRC1-like complex, a complex class required to maintain the transcriptionally repressive state of many genes, including Hox genes, throughout development. PcG PRC1 complex acts via chromatin remodeling and modification of histones; it mediates monoubiquitination of histone H2A 'Lys-119', rendering chromatin heritably changed in its expressibility. In Danio rerio (Zebrafish), this protein is Polyhomeotic-like protein 2 (phc2).